Here is a 476-residue protein sequence, read N- to C-terminus: Probable G-protein coupled receptor No9 (476 aa).

Over 1-36 (MEGPPLSPAPADNVTLNVSCGRPATLFDWADHRLIS) the chain is Extracellular. 2 N-linked (GlcNAc...) asparagine glycosylation sites follow: N13 and N17. The chain crosses the membrane as a helical span at residues 37-60 (LLALAFLNLMVVAGNLLVVMAVFV). Residues 61 to 69 (HSKLRTVTN) are Cytoplasmic-facing. The chain crosses the membrane as a helical span at residues 70–93 (LFIVSLACADLLVGMLVLPFSATL). The Extracellular portion of the chain corresponds to 94-103 (EVLDVWLYGD). The helical transmembrane segment at 104–127 (VWCSVWLAVDVWMCTSSILNLCAI) threads the bilayer. The cysteines at positions 106 and 192 are disulfide-linked. Topologically, residues 128–152 (SLDRYLAVSQPISYPSLMSTRRAKQ) are cytoplasmic. A helical transmembrane segment spans residues 153-172 (LIAAVWVLSFVICFPPLVGW). Over 173-200 (NDRPGTLIGSRGSSACRLTCELTNERGY) the chain is Extracellular. A helical transmembrane segment spans residues 201-221 (VIYSALGSFFLPSTVMLFFYG). At 222–375 (RIYRTAVSTT…FRMETKAAKT (154 aa)) the chain is on the cytoplasmic side. Over residues 266–278 (AAAGGARAHGQVR) the composition is skewed to low complexity. Disordered stretches follow at residues 266–293 (AAAG…NKPS) and 317–351 (DSRP…PRFI). The helical transmembrane segment at 376 to 396 (VGIIVGLFILCWLPFFVCYLV) threads the bilayer. At 397-406 (RGFCADCVPP) the chain is on the extracellular side. Residues 407–430 (LLFSVFFWLGYCNSAVNPCVYALC) form a helical membrane-spanning segment. Residues 431–476 (SRDFRFAFSSILCKCVCRRGAMERRFRRTLLVGNRSQTEEDCEVAD) lie on the Cytoplasmic side of the membrane.

The protein belongs to the G-protein coupled receptor 1 family.

The protein resides in the cell membrane. Orphan G-protein coupled receptor. This Amphibalanus amphitrite (Striped barnacle) protein is Probable G-protein coupled receptor No9.